The primary structure comprises 1397 residues: DNA-directed RNA polymerase subunit beta' (1397 aa).

Positions 71, 73, 86, and 89 each coordinate Zn(2+). Positions 462, 464, and 466 each coordinate Mg(2+). Residues Cys811, Cys885, Cys892, and Cys895 each contribute to the Zn(2+) site. The tract at residues 1368 to 1397 (QNRDDKILEDQGGATPTASTEIKEPAEGAA) is disordered. Residues 1388–1397 (EIKEPAEGAA) are compositionally biased toward basic and acidic residues.

This sequence belongs to the RNA polymerase beta' chain family. The RNAP catalytic core consists of 2 alpha, 1 beta, 1 beta' and 1 omega subunit. When a sigma factor is associated with the core the holoenzyme is formed, which can initiate transcription. Mg(2+) serves as cofactor. Zn(2+) is required as a cofactor.

It carries out the reaction RNA(n) + a ribonucleoside 5'-triphosphate = RNA(n+1) + diphosphate. In terms of biological role, DNA-dependent RNA polymerase catalyzes the transcription of DNA into RNA using the four ribonucleoside triphosphates as substrates. In Parvibaculum lavamentivorans (strain DS-1 / DSM 13023 / NCIMB 13966), this protein is DNA-directed RNA polymerase subunit beta'.